The primary structure comprises 598 residues: UvrABC system protein C (598 aa).

A GIY-YIG domain is found at 13 to 92 (SSPGVYLMKD…IKKYQPRYNV (80 aa)). The region spanning 206–241 (RSTISNLEKAIEKASQEQKFEHAAALYRTLTLIRQT) is the UVR domain.

The protein belongs to the UvrC family. Interacts with UvrB in an incision complex.

It is found in the cytoplasm. Functionally, the UvrABC repair system catalyzes the recognition and processing of DNA lesions. UvrC both incises the 5' and 3' sides of the lesion. The N-terminal half is responsible for the 3' incision and the C-terminal half is responsible for the 5' incision. The protein is UvrABC system protein C of Chlamydia trachomatis serovar A (strain ATCC VR-571B / DSM 19440 / HAR-13).